Here is a 1178-residue protein sequence, read N- to C-terminus: Zinc finger CCHC domain-containing protein 2 (1178 aa).

Disordered stretches follow at residues 1–90, 207–249, 557–683, and 936–986; these read MLRM…GPSA, AARG…RVGG, VTSA…SVNQ, and LSTA…SDST. Over residues 43 to 67 the composition is skewed to pro residues; the sequence is PPPPPPPPAGPSRGPLPPPPPPRGL. A compositionally biased stretch (gly residues) spans 75–88; sequence AAAGAGMPGGGGGP. Positions 208–219 are enriched in basic and acidic residues; the sequence is ARGEGSRGGAED. The span at 220-229 shows a compositional bias: acidic residues; that stretch reads ERGEDGDGEQ. Ser-236 is subject to Phosphoserine. Positions 580–594 are enriched in basic and acidic residues; that stretch reads PQTEKEKIKKTDNRL. Residues 595–607 are compositionally biased toward polar residues; sequence NSRINGIRLSTPQ. Low complexity predominate over residues 632-641; the sequence is SSESYSSPSS. Residues 642–661 show a composition bias toward basic and acidic residues; that stretch reads PRHDGRESFESEEEKDRDTD. Polar residues predominate over residues 665–683; sequence EDSGNPSTTRFTGYGSVNQ. The segment covering 937–948 has biased composition (low complexity); the sequence is STAATSPQPASA. The segment covering 959–973 has biased composition (pro residues); it reads PAVPTHTPGPAPSPS. A compositionally biased stretch (polar residues) spans 974-986; the sequence is PALTHSTAQSDST. A CCHC-type zinc finger spans residues 1131-1148; the sequence is VSCYNCGVSGHYAQDCKQ.

In Homo sapiens (Human), this protein is Zinc finger CCHC domain-containing protein 2.